The chain runs to 163 residues: Shikimate kinase (163 aa).

10–15 contacts ATP; sequence GVGKTT. A Mg(2+)-binding site is contributed by T14. Substrate-binding residues include D28, R52, and G75. R116 is an ATP binding site. Residue R134 coordinates substrate. R151 contributes to the ATP binding site.

It belongs to the shikimate kinase family. As to quaternary structure, monomer. Mg(2+) is required as a cofactor.

The protein resides in the cytoplasm. The enzyme catalyses shikimate + ATP = 3-phosphoshikimate + ADP + H(+). It functions in the pathway metabolic intermediate biosynthesis; chorismate biosynthesis; chorismate from D-erythrose 4-phosphate and phosphoenolpyruvate: step 5/7. Its function is as follows. Catalyzes the specific phosphorylation of the 3-hydroxyl group of shikimic acid using ATP as a cosubstrate. This is Shikimate kinase from Streptococcus pyogenes serotype M49 (strain NZ131).